Consider the following 263-residue polypeptide: Proteasome subunit alpha type-1 (263 aa).

M1 is modified (N-acetylmethionine). At S110 the chain carries Phosphoserine; alternate. S110 carries O-linked (GlcNAc) serine; alternate glycosylation. A Glycyl lysine isopeptide (Lys-Gly) (interchain with G-Cter in ubiquitin) cross-link involves residue K115. S177 carries the post-translational modification Phosphoserine. K208 is covalently cross-linked (Glycyl lysine isopeptide (Lys-Gly) (interchain with G-Cter in ubiquitin)). Residues 232-263 (FLDGLEERPQRKAQPSQAADEPAEKADEPMEH) are disordered. The segment covering 253 to 263 (PAEKADEPMEH) has biased composition (basic and acidic residues).

It belongs to the peptidase T1A family. The 26S proteasome consists of a 20S proteasome core and two 19S regulatory subunits. The 20S proteasome core is a barrel-shaped complex made of 28 subunits that are arranged in four stacked rings. The two outer rings are each formed by seven alpha subunits, and the two inner rings are formed by seven beta subunits. The proteolytic activity is exerted by three beta-subunits PSMB5, PSMB6 and PSMB7. Interacts with NOTCH3. Interacts with ZFAND1. Proteolytically cleaved from a C-terminal extension in the course of the conversion of the proteasome from its latent form into its active form. Ubiquitous.

The protein resides in the cytoplasm. It is found in the nucleus. Functionally, component of the 20S core proteasome complex involved in the proteolytic degradation of most intracellular proteins. This complex plays numerous essential roles within the cell by associating with different regulatory particles. Associated with two 19S regulatory particles, forms the 26S proteasome and thus participates in the ATP-dependent degradation of ubiquitinated proteins. The 26S proteasome plays a key role in the maintenance of protein homeostasis by removing misfolded or damaged proteins that could impair cellular functions, and by removing proteins whose functions are no longer required. Associated with the PA200 or PA28, the 20S proteasome mediates ubiquitin-independent protein degradation. This type of proteolysis is required in several pathways including spermatogenesis (20S-PA200 complex) or generation of a subset of MHC class I-presented antigenic peptides (20S-PA28 complex). The chain is Proteasome subunit alpha type-1 (Psma1) from Rattus norvegicus (Rat).